Reading from the N-terminus, the 132-residue chain is MVMTDPIADMLTRIRNANMVRHEKLEIPASKLKREIADILKREGFIRDVEFVEDSKQGIIRVFLKYGQNNERVITGLKRISKPGLRVYAKSNEVPRVLNGLGIAIISTSQGVLTDKEARAKQAGGEVLAYVW.

Belongs to the universal ribosomal protein uS8 family. Part of the 30S ribosomal subunit. Contacts proteins S5 and S12.

Its function is as follows. One of the primary rRNA binding proteins, it binds directly to 16S rRNA central domain where it helps coordinate assembly of the platform of the 30S subunit. In Bacillus velezensis (strain DSM 23117 / BGSC 10A6 / LMG 26770 / FZB42) (Bacillus amyloliquefaciens subsp. plantarum), this protein is Small ribosomal subunit protein uS8.